Here is a 164-residue protein sequence, read N- to C-terminus: Cyanate hydratase (164 aa).

Residues R90, E93, and S116 contribute to the active site.

The protein belongs to the cyanase family.

The catalysed reaction is cyanate + hydrogencarbonate + 3 H(+) = NH4(+) + 2 CO2. Functionally, catalyzes the reaction of cyanate with bicarbonate to produce ammonia and carbon dioxide. The chain is Cyanate hydratase from Ricinus communis (Castor bean).